A 316-amino-acid chain; its full sequence is Metal tolerance protein 8 (316 aa).

Topologically, residues 1 to 15 (MGPVRHILNERKSRK) are cytoplasmic. A helical membrane pass occupies residues 16 to 36 (IAAFLLINTAYMFVEFTSGFM). The Vacuolar portion of the chain corresponds to 37–45 (SDSLGLISD). Residues 46-66 (ACHMLFDCAALAIGLYASYIA) traverse the membrane as a helical segment. Over 67 to 80 (RLPANGLYNYGRGR) the chain is Cytoplasmic. The helical transmembrane segment at 81–101 (FEVLSGYVNAVFLVLVGALIV) threads the bilayer. Topologically, residues 102 to 116 (LESFERILEPREIST) are vacuolar. The chain crosses the membrane as a helical span at residues 117 to 137 (SSLLTVSIGGLVVNVIGLVFF). Over 138 to 176 (HEEHHHAHGEAHSCNGGLQSSENHNKSRNRHHIDHNMEG) the chain is Cytoplasmic. A disordered region spans residues 147–166 (EAHSCNGGLQSSENHNKSRN). The helical transmembrane segment at 177-197 (IFLHVLADTMGSVGVVISTLL) threads the bilayer. Residues 198–202 (IKYKG) lie on the Vacuolar side of the membrane. A helical membrane pass occupies residues 203 to 223 (WLIADPICSVFISIMIVSSVL). Residues 224-316 (PLLRNSAEIL…LTIQIECVKR (93 aa)) lie on the Cytoplasmic side of the membrane.

This sequence belongs to the cation diffusion facilitator (CDF) transporter (TC 2.A.4) family. SLC30A subfamily.

Its subcellular location is the vacuole membrane. In terms of biological role, involved in sequestration of excess metal in the cytoplasm into vacuoles to maintain metal homeostasis. This is Metal tolerance protein 8 (MTP8) from Oryza sativa subsp. japonica (Rice).